The chain runs to 521 residues: Organic cation/carnitine transporter 6 (521 aa).

Topologically, residues 1–37 (MADPISEPLLSHLTDDSGVNEKTRLEALTFDKIVEQS) are cytoplasmic. A helical membrane pass occupies residues 38-58 (LSDFGFWQFFQISLVGLALLF). The Extracellular segment spans residues 59 to 123 (DAQQIFITVY…GLECSSSLLR (65 aa)). Residue asparagine 79 is glycosylated (N-linked (GlcNAc...) asparagine). The chain crosses the membrane as a helical span at residues 124–144 (GMPSSAFYIGAIVGGFFLALI). Residues 145–154 (PDDSLGRKKL) are Cytoplasmic-facing. Residues 155–177 (VLFSTFAMSITSISVIFSTNVWI) traverse the membrane as a helical segment. Over 178-182 (YTFLK) the chain is Extracellular. The helical transmembrane segment at 183–200 (FIIGFSRSQTWSYALVLI) threads the bilayer. Position 200–207 (200–207 (ISERVSTR)) interacts with ATP. Topologically, residues 201–213 (SERVSTRWRPRAT) are cytoplasmic. The chain crosses the membrane as a helical span at residues 214 to 234 (MIPFTLFVLGFMSLSGIAFLA). The Extracellular segment spans residues 235–241 (QDSSWRY). A helical membrane pass occupies residues 242 to 262 (LYLYTSVPAVFYCIFLYLFAL). Residues 263–326 (ESPRWLHMQG…FFFRKWAFRR (64 aa)) lie on the Cytoplasmic side of the membrane. A helical membrane pass occupies residues 327-347 (ILVVMIIMFGLGISYYGVPLA). The Extracellular portion of the chain corresponds to 348 to 356 (ARDIDVNIY). The chain crosses the membrane as a helical span at residues 357 to 377 (LSETLNALVELPTFVITPILL). Over 378–385 (ERFNRRSS) the chain is Cytoplasmic. A helical membrane pass occupies residues 386–406 (VLVNTLLGGASGVLCFVLSIL). The Extracellular portion of the chain corresponds to 407-412 (GKTEIA). A helical membrane pass occupies residues 413–433 (FAFELGTFFCARIGFNLMAVF). Over 434-447 (MVEMFPTCVRSSAT) the chain is Cytoplasmic. Residues 448–468 (MMFRQALVVGGACCPLIASIG) form a helical membrane-spanning segment. The Extracellular portion of the chain corresponds to 469–473 (RYIPS). The helical transmembrane segment at 474–494 (VSFAIFGIAMSGLGMFVLILP) threads the bilayer. At 495–521 (ETKGLSLCDSMEEQEKRDQAVNTSHVC) the chain is on the cytoplasmic side.

Belongs to the major facilitator (TC 2.A.1) superfamily. Organic cation transporter (TC 2.A.1.19) family. In terms of tissue distribution, expressed in roots and stems. In the stem of secondary inflorescences, localized to the phloem. Also present in flowers, specifically in the stamen, in the filaments and the connective, and restricted to major veins in leaves.

The protein resides in the vacuole membrane. Functionally, high affinity carnitine transporter involved in the active cellular uptake of carnitine. Also transports organic cations. The protein is Organic cation/carnitine transporter 6 (OCT6) of Arabidopsis thaliana (Mouse-ear cress).